Reading from the N-terminus, the 339-residue chain is Glycerol-3-phosphate dehydrogenase [NAD(P)+] (339 aa).

Positions 11, 12, and 109 each coordinate NADPH. Lysine 109, glycine 140, and serine 142 together coordinate sn-glycerol 3-phosphate. Alanine 144 contacts NADPH. Residues lysine 195, aspartate 249, serine 259, arginine 260, and asparagine 261 each coordinate sn-glycerol 3-phosphate. The active-site Proton acceptor is lysine 195. Residue arginine 260 coordinates NADPH. NADPH is bound by residues valine 284 and glutamate 286.

It belongs to the NAD-dependent glycerol-3-phosphate dehydrogenase family.

The protein localises to the cytoplasm. It carries out the reaction sn-glycerol 3-phosphate + NAD(+) = dihydroxyacetone phosphate + NADH + H(+). The enzyme catalyses sn-glycerol 3-phosphate + NADP(+) = dihydroxyacetone phosphate + NADPH + H(+). It participates in membrane lipid metabolism; glycerophospholipid metabolism. Functionally, catalyzes the reduction of the glycolytic intermediate dihydroxyacetone phosphate (DHAP) to sn-glycerol 3-phosphate (G3P), the key precursor for phospholipid synthesis. The polypeptide is Glycerol-3-phosphate dehydrogenase [NAD(P)+] (Lactobacillus acidophilus (strain ATCC 700396 / NCK56 / N2 / NCFM)).